Consider the following 518-residue polypeptide: ATP synthase subunit alpha (518 aa).

Gly-169–Thr-176 is a binding site for ATP.

This sequence belongs to the ATPase alpha/beta chains family. In terms of assembly, F-type ATPases have 2 components, CF(1) - the catalytic core - and CF(0) - the membrane proton channel. CF(1) has five subunits: alpha(3), beta(3), gamma(1), delta(1), epsilon(1). CF(0) has three main subunits: a(1), b(2) and c(9-12). The alpha and beta chains form an alternating ring which encloses part of the gamma chain. CF(1) is attached to CF(0) by a central stalk formed by the gamma and epsilon chains, while a peripheral stalk is formed by the delta and b chains.

It is found in the cell membrane. The catalysed reaction is ATP + H2O + 4 H(+)(in) = ADP + phosphate + 5 H(+)(out). Produces ATP from ADP in the presence of a proton gradient across the membrane. The alpha chain is a regulatory subunit. This Mycoplasma genitalium (strain ATCC 33530 / DSM 19775 / NCTC 10195 / G37) (Mycoplasmoides genitalium) protein is ATP synthase subunit alpha.